We begin with the raw amino-acid sequence, 552 residues long: MKDIEIAQKSEMLPITEVAQKVGLTADEIEQYGKYKAKISLPLSAREQTKRKLVLVTAINPTPAGEGKSTVTVGLGDAFSLLNKKVMIALREPSLGPVMGMKGGATGGGYSQVVPMEDINLHFTGDMHALTTANNTLAALIDNHIYQGNKLNIDQRRVIWKRVLDINDRALRHVVIGLGGATQGIPREDGFDITVASELMAILCLSKDISDLKKRIGQIVIGYNFDKEPVTVDQLGVTGAITLLLKDACKPNLVQTLAHTPAIVHGGPFANIAHGCNSVLATQTALNLADYTITEAGFGADLGAEKFLDIKTPVLGKTPDTIVIVATARALKMNGGVAKDNLDEENVAAVEQGFANLKKHIQSMKRYNVPVVVAINKFTQDTDAELAKIVELCEQDDTKAIVADVWAKGGEGATELAKAVIESCDNDQEFTRLYNSDDSVEEKINKIVTEIYGGDGVEFSAKAKRQLRQFEKLGWNHLPVCMAKTQYSLSDNAKVLGAPKGFKIHVREFVPKLGAQFLVALTGNILTMPGLPKVPAADGMDVDENGKISGLY.

62–69 (TPAGEGKS) contributes to the ATP binding site.

This sequence belongs to the formate--tetrahydrofolate ligase family.

It carries out the reaction (6S)-5,6,7,8-tetrahydrofolate + formate + ATP = (6R)-10-formyltetrahydrofolate + ADP + phosphate. The protein operates within one-carbon metabolism; tetrahydrofolate interconversion. The chain is Formate--tetrahydrofolate ligase from Ligilactobacillus salivarius (strain UCC118) (Lactobacillus salivarius).